Consider the following 258-residue polypeptide: MGLGEASARGTSMEGDCLSCIKYLMFVFNFLIFLGGSFLLGVGVWVVVDPTGFREIVAANPLLFTGVYIILAMGGMLFLLGFLGCCGAIRENKCLLLFFFMLILIIFLAELAAAILAFIFREHLTREYFTKELKKHYQGYNNTDVFTSTWNAIMNTFDCCGVNSPEDFEESIFRIINPSEMVPEACCRRNNHVGESGFSNREECLSGSMLYRNNKGCYSAVVDYFEMYIYVAGALAIVVLTIELFAMVFAMCLFRGIQ.

The Cytoplasmic portion of the chain corresponds to 1 to 25; it reads MGLGEASARGTSMEGDCLSCIKYLM. Residues 26 to 46 form a helical membrane-spanning segment; it reads FVFNFLIFLGGSFLLGVGVWV. At 47-61 the chain is on the extracellular side; it reads VVDPTGFREIVAANP. Residues 62-82 form a helical membrane-spanning segment; the sequence is LLFTGVYIILAMGGMLFLLGF. Over 83 to 94 the chain is Cytoplasmic; it reads LGCCGAIRENKC. Residues 95-115 form a helical membrane-spanning segment; sequence LLLFFFMLILIIFLAELAAAI. Residues 116-228 lie on the Extracellular side of the membrane; that stretch reads LAFIFREHLT…SAVVDYFEMY (113 aa). Asparagine 141 is a glycosylation site (N-linked (GlcNAc...) asparagine). The chain crosses the membrane as a helical span at residues 229-249; sequence IYVAGALAIVVLTIELFAMVF. At 250-258 the chain is on the cytoplasmic side; it reads AMCLFRGIQ.

The protein belongs to the tetraspanin (TM4SF) family.

The protein localises to the membrane. Functionally, may regulate angiogenesis through KDR/VEGFR2 and NOTCH1 pathways. This chain is Tetraspanin-18B (tspan18b), found in Danio rerio (Zebrafish).